We begin with the raw amino-acid sequence, 367 residues long: Phosphoribosylaminoimidazole-succinocarboxamide synthase (367 aa).

This sequence belongs to the SAICAR synthetase family.

The enzyme catalyses 5-amino-1-(5-phospho-D-ribosyl)imidazole-4-carboxylate + L-aspartate + ATP = (2S)-2-[5-amino-1-(5-phospho-beta-D-ribosyl)imidazole-4-carboxamido]succinate + ADP + phosphate + 2 H(+). Its pathway is purine metabolism; IMP biosynthesis via de novo pathway; 5-amino-1-(5-phospho-D-ribosyl)imidazole-4-carboxamide from 5-amino-1-(5-phospho-D-ribosyl)imidazole-4-carboxylate: step 1/2. The chain is Phosphoribosylaminoimidazole-succinocarboxamide synthase from Shewanella sp. (strain MR-7).